Here is a 283-residue protein sequence, read N- to C-terminus: MTEIRRLRILITNDDGIKAKGISLLISLLREADFADLYIVAPLEEQSGRSMAFSLVEPTTLEPFDYPQRVQEAWAVTGTPVDCVKLAIGELFKENALDLILSGINNGKNSGRCLYYSATVGAIREANLHGIPAIALSQSENIAFFQEAHMASLIRSLCEFTVAYKHTDPLGLNVNFPASTDDSPWKGIRFTLSGNEFLFGIPRLVRTEGNRRYYTLYDMRDKVSEEFSEEYLALANNYISAAPLVSKNTPRATLSEEELAFLKDSFEQSVLWKASLNLEEDLA.

A divalent metal cation-binding residues include Asp-14, Asp-15, Ser-47, and Asn-105.

The protein belongs to the SurE nucleotidase family. A divalent metal cation serves as cofactor.

Its subcellular location is the cytoplasm. The enzyme catalyses a ribonucleoside 5'-phosphate + H2O = a ribonucleoside + phosphate. Its function is as follows. Nucleotidase that shows phosphatase activity on nucleoside 5'-monophosphates. This is 5'-nucleotidase SurE from Chlamydia trachomatis serovar A (strain ATCC VR-571B / DSM 19440 / HAR-13).